Here is an 843-residue protein sequence, read N- to C-terminus: MPLSYQHFRKLLLLDEEAGPLEEELPRLADEGLNRRVAEDLNLGNLNVSIPWTHKVGNFTGLYSSTVPCFNPKWQTPSFPDIHLQEDIVDRCKQFVGPLTVNENRRLKLIMPARFYPNVTKYLPLDKGIKPYYPEYVVNHYFQTRHYLHTLWKAGILYKRESTRSASFCGSPYSWEQDLQHGRLVFQTSKRHGDKSFCPQSSGILPRSSVGPCIQSQLRKSRLGPQPEQGQLAGRQQGGSGSIRARVHPSPWGTVGVEPSGSGPTHNCASSSSSCLHQSAVRKAAYSLIPTSKGHSSSGHAVELHHFPPNSSRSRSQGPVLSCWWLQFRNSEPCSEYCLCHIVNLIEDWGPCTEHGEHRIRTPRTPARVTGGVFLVDKNPHNTTESRLVVDFSQFSRGNTRVSWPKFAVPNLQSLTNLLSSNLSWLSLDVSAAFYHLPLHPAAMPHLLVGSSGLSRYVARLSSNSRIINNQHRTMQNLHNSCSRNLYVSLMLLYKTYGWKLHLYSHPIILGFRKIPMGVGLSPFLLAQFTSAICSVVRRAFPHCLAFSYMDDMVLGAKSVQHLESLYAAVTNFLLSLGIHLNPHKTKRWGYSLNFMGYVIGSWGTLPQEHIVQKIKMWFRKLPVNRPIDWKVCQRIVGLLGFAAPFTQCGYPALMPLYACIQAKQAFTFSPTYKAFLTKQYLNLYPVARQRPGLCQVFADATPTGWGLAIGHQRMRGTFVSPLPIHTAELLAACFARSRSGAKLIGTDNSVVLSRKYTSFPWLLGCAANWILRGTSFVYVPSALNPADDPSRGRLGLYRPLLRLLYRPTTGRTSLYADSPSVPSHLPDRVHFASPLHVAWRPP.

Residues 1–177 form a terminal protein domain (TP) region; the sequence is MPLSYQHFRK…FCGSPYSWEQ (177 aa). Residues 178-346 are spacer; the sequence is DLQHGRLVFQ…YCLCHIVNLI (169 aa). Disordered regions lie at residues 220–269 and 291–316; these read KSRL…HNCA and TSKG…RSRS. The interval 347 to 690 is polymerase/reverse transcriptase domain (RT); that stretch reads EDWGPCTEHG…YLNLYPVARQ (344 aa). The Reverse transcriptase domain maps to 357 to 600; the sequence is EHRIRTPRTP…YSLNFMGYVI (244 aa). Mg(2+) is bound by residues Asp429, Asp551, and Asp552.

This sequence belongs to the hepadnaviridae P protein family.

The catalysed reaction is DNA(n) + a 2'-deoxyribonucleoside 5'-triphosphate = DNA(n+1) + diphosphate. It carries out the reaction Endonucleolytic cleavage to 5'-phosphomonoester.. With respect to regulation, activated by host HSP70 and HSP40 in vitro to be able to bind the epsilon loop of the pgRNA. Because deletion of the RNase H region renders the protein partly chaperone-independent, the chaperones may be needed indirectly to relieve occlusion of the RNA-binding site by this domain. Inhibited by several reverse-transcriptase inhibitors: Lamivudine, Adefovir and Entecavir. Its function is as follows. Multifunctional enzyme that converts the viral RNA genome into dsDNA in viral cytoplasmic capsids. This enzyme displays a DNA polymerase activity that can copy either DNA or RNA templates, and a ribonuclease H (RNase H) activity that cleaves the RNA strand of RNA-DNA heteroduplexes in a partially processive 3'- to 5'-endonucleasic mode. Neo-synthesized pregenomic RNA (pgRNA) are encapsidated together with the P protein, and reverse-transcribed inside the nucleocapsid. Initiation of reverse-transcription occurs first by binding the epsilon loop on the pgRNA genome, and is initiated by protein priming, thereby the 5'-end of (-)DNA is covalently linked to P protein. Partial (+)DNA is synthesized from the (-)DNA template and generates the relaxed circular DNA (RC-DNA) genome. After budding and infection, the RC-DNA migrates in the nucleus, and is converted into a plasmid-like covalently closed circular DNA (cccDNA). The activity of P protein does not seem to be necessary for cccDNA generation, and is presumably released from (+)DNA by host nuclear DNA repair machinery. This is Protein P from Homo sapiens (Human).